A 183-amino-acid polypeptide reads, in one-letter code: Probable GTP-binding protein EngB (183 aa).

The region spanning 17-183 is the EngB-type G domain; sequence DYPEVVFVGR…KKELLSRILN (167 aa). GTP contacts are provided by residues 25–32, 51–55, 69–72, 137–140, and 166–168; these read GRSNVGKS, GRTRA, DVPG, TKID, and SSA. The Mg(2+) site is built by Ser32 and Thr53.

This sequence belongs to the TRAFAC class TrmE-Era-EngA-EngB-Septin-like GTPase superfamily. EngB GTPase family. Mg(2+) is required as a cofactor.

Its function is as follows. Necessary for normal cell division and for the maintenance of normal septation. This is Probable GTP-binding protein EngB from Aquifex aeolicus (strain VF5).